Here is a 123-residue protein sequence, read N- to C-terminus: Fluoride-specific ion channel FluC (123 aa).

The next 4 helical transmembrane spans lie at 7–27 (LLLI…SGIL), 39–59 (LVNS…FFGF), 67–87 (IFLG…SYET), and 100–120 (FMNV…GFIL). Gly-75 and Ser-78 together coordinate Na(+).

It belongs to the fluoride channel Fluc/FEX (TC 1.A.43) family.

Its subcellular location is the cell membrane. The catalysed reaction is fluoride(in) = fluoride(out). Its activity is regulated as follows. Na(+) is not transported, but it plays an essential structural role and its presence is essential for fluoride channel function. Fluoride-specific ion channel. Important for reducing fluoride concentration in the cell, thus reducing its toxicity. The chain is Fluoride-specific ion channel FluC from Pyrococcus abyssi (strain GE5 / Orsay).